A 419-amino-acid polypeptide reads, in one-letter code: Putative competence-damage inducible protein (419 aa).

The protein belongs to the CinA family.

The chain is Putative competence-damage inducible protein from Streptococcus agalactiae serotype III (strain NEM316).